Consider the following 869-residue polypeptide: DNA mismatch repair protein MutS (869 aa).

624-631 (GPNMGGKS) is a binding site for ATP.

It belongs to the DNA mismatch repair MutS family.

Its function is as follows. This protein is involved in the repair of mismatches in DNA. It is possible that it carries out the mismatch recognition step. This protein has a weak ATPase activity. In Solibacter usitatus (strain Ellin6076), this protein is DNA mismatch repair protein MutS.